Reading from the N-terminus, the 2542-residue chain is Unconventional myosin-IXa (2542 aa).

Residues 14-112 (NEHTLRIYPG…YRFLLREKNL (99 aa)) enclose the Ras-associating domain. Residues 146-1017 (KDFDDLCSLP…ERQHLQDLLH (872 aa)) enclose the Myosin motor domain. A helical transmembrane segment spans residues 175–195 (IYTYVGSILIAINPFKFLPIY). Position 239 to 246 (239 to 246 (GESGSGKT)) interacts with ATP. Ser755 is subject to Phosphoserine. Residues 908-919 (QAEPYFVKCIRS) form an actin-binding region. IQ domains follow at residues 1021 to 1041 (LRRI…QQFL), 1043 to 1072 (LRQA…EKDA), 1075 to 1104 (MASA…AAVI), 1116 to 1145 (RHKA…KIIL), and 1139 to 1168 (QRNK…EKLR). Positions 1022–1163 (RRIVLLQRWF…RARQRCNALK (142 aa)) are neck or regulatory domain. The tract at residues 1164 to 2505 (EEKLREAKLE…LKNVKNSPQK (1342 aa)) is tail. Positions 1221–1240 (RESSMDFSKESPDKQQERGR) are enriched in basic and acidic residues. The interval 1221-1276 (RESSMDFSKESPDKQQERGRRQSGTDLQEDVIVRQRPKSLEDLHQKKVGRAKRESR) is disordered. Position 1243 is a phosphoserine (Ser1243). Phosphothreonine is present on Thr1245. At Ser1259 the chain carries Phosphoserine. Residues 1265-1292 (QKKVGRAKRESRRMRELEQAIFSLELLK) adopt a coiled-coil conformation. Over residues 1266 to 1276 (KKVGRAKRESR) the composition is skewed to basic residues. Phosphoserine occurs at positions 1300 and 1318. Residues 1342 to 1401 (KSKPESLILDEGELKISSPNTFTNPKSQDNALSASSETSSTLAGKGASSDSEHLKNGTAK) are disordered. Residues 1358–1371 (SSPNTFTNPKSQDN) are compositionally biased toward polar residues. The span at 1372 to 1384 (ALSASSETSSTLA) shows a compositional bias: low complexity. Basic and acidic residues predominate over residues 1391–1401 (DSEHLKNGTAK). The stretch at 1492–1539 (TVLKKLEKLNIEKEKRQKQLQQQNEKEMMEQIRQQTDILEKERKAFKT) forms a coiled coil. Disordered stretches follow at residues 1650–1675 (RSTE…REGS), 1693–1727 (SGNP…SVDE), 1767–1793 (GKQG…PGPD), and 1806–1841 (QYHP…KRGV). Residues 1665-1675 (HRSDDPSREGS) show a composition bias toward basic and acidic residues. A compositionally biased stretch (polar residues) spans 1715 to 1726 (QQETSQRFSSVD). A compositionally biased stretch (basic and acidic residues) spans 1821-1833 (CRKEFKENKEPSP). Phosphoserine is present on Ser1950. Phorbol-ester/DAG-type zinc fingers lie at residues 2001-2050 (GHIF…TAKC) and 2068-2119 (SRLT…DTDA). Residues 2065 to 2253 (VELSRLTSED…LIVVEQMNKY (189 aa)) enclose the Rho-GAP domain. A phosphoserine mark is found at Ser2293 and Ser2296. The stretch at 2324-2360 (TDQQQAAMQQEEKVLTEQIENLQKEKEELTFEMLVLE) forms a coiled coil. Residues 2361-2443 (PRASDDETLE…NTTSSHGTRK (83 aa)) are disordered. The segment covering 2377–2386 (TADSSENLNM) has biased composition (polar residues). Over residues 2420-2438 (SLDSVSSSVSSCLSNTTSS) the composition is skewed to low complexity. Residue Ser2458 is modified to Phosphoserine. The segment at 2465-2530 (TEGPLGQAKS…TVDSDCSSTQ (66 aa)) is disordered.

Belongs to the TRAFAC class myosin-kinesin ATPase superfamily. Myosin family. Post-translationally, phosphorylated by ALPK1 following monosodium urate monohydrate (MSU)-induced inflammation. Expressed in the eye, lung, liver, brain, heart, kidney, skeletal muscle and spleen. No detection was found in liver. In the brain, expressed in the ependymal cells of the third ventricle and the aqueduct.

The protein resides in the membrane. It is found in the cytoplasm. The protein localises to the synapse. It localises to the cell projection. Its subcellular location is the growth cone. Functionally, myosins are actin-based motor molecules with ATPase activity. Unconventional myosins serve in intracellular movements. Regulates Rho by stimulating it's GTPase activity in neurons. Required for the regulation of neurite branching and motor neuron axon guidance. This chain is Unconventional myosin-IXa (Myo9a), found in Mus musculus (Mouse).